Reading from the N-terminus, the 306-residue chain is Low density lipoprotein receptor adapter protein 1 (306 aa).

The residue at position 1 (Met1) is an N-acetylmethionine. Ser14 is modified (phosphoserine). Positions 44–168 (GMVFSLKYLG…VAQAFKVAFE (125 aa)) constitute a PID domain. A disordered region spans residues 178-204 (EKREKANQEGGDVPGTRRDSTPSLKTS). Residues Ser197 and Ser200 each carry the phosphoserine modification. The short motif at 210–214 (LLDLE) is the Clathrin box element. The interval 247-274 (WELDDGLDEAFSRLAQSRTNPQVLDTGL) is AP-2 complex binding. The short motif at 255–264 (EAFSRLAQSR) is the [DE]-X(1,2)-F-X-X-[FL]-X-X-X-R motif element.

Interacts (via PID domain) with LDLR (via NPXY motifs). Binds to soluble clathrin trimers. Interacts with AP2B1; the interaction mediates the association with the AP-2 complex. Interacts with VLDLR. Interacts with LRP2.

The protein localises to the cytoplasm. Its function is as follows. Adapter protein (clathrin-associated sorting protein (CLASP)) required for efficient endocytosis of the LDL receptor (LDLR) in polarized cells such as hepatocytes and lymphocytes, but not in non-polarized cells (fibroblasts). May be required for LDL binding and internalization but not for receptor clustering in coated pits. May facilitate the endocytosis of LDLR and LDLR-LDL complexes from coated pits by stabilizing the interaction between the receptor and the structural components of the pits. May also be involved in the internalization of other LDLR family members. Binds to phosphoinositides, which regulate clathrin bud assembly at the cell surface. Required for trafficking of LRP2 to the endocytic recycling compartment which is necessary for LRP2 proteolysis, releasing a tail fragment which translocates to the nucleus and mediates transcriptional repression. In Rattus norvegicus (Rat), this protein is Low density lipoprotein receptor adapter protein 1.